Here is a 412-residue protein sequence, read N- to C-terminus: Adenosine receptor A2a (412 aa).

Over 1-7 the chain is Extracellular; sequence MPTVGSL. Residues 8–32 form a helical membrane-spanning segment; the sequence is VYIMVELAIALLAILGNMLVCWAVW. The Cytoplasmic segment spans residues 33–42; sequence LNSNLQNVTN. A helical transmembrane segment spans residues 43 to 66; the sequence is YFVVSLAAADIAVGVLAIPFAITI. Residues 67 to 77 are Extracellular-facing; it reads STGFCAACHGC. 3 cysteine pairs are disulfide-bonded: Cys71/Cys159, Cys74/Cys146, and Cys77/Cys166. The chain crosses the membrane as a helical span at residues 78–100; that stretch reads LFIACFVLVLTQSSIFSLLAIAI. Over 101–120 the chain is Cytoplasmic; that stretch reads DRYIAIRIPLRYNGLVTGTR. Residues 121 to 143 traverse the membrane as a helical segment; sequence AKGVIAVCWVLSFAIGLTPMLGW. Residues 144–173 are Extracellular-facing; that stretch reads NNCHHWGEGENQSQGCGEGQVACLFEDVVP. The N-linked (GlcNAc...) asparagine glycan is linked to Asn154. Glu169 contacts adenosine. Residues 174–198 traverse the membrane as a helical segment; that stretch reads MNYMVYYNFFACVLVPLLLMLGVYL. Residues 199 to 234 are Cytoplasmic-facing; sequence RIFLAARRQLKQMETQPLPGERARSTLQKEVHAAKS. Residues 235–258 form a helical membrane-spanning segment; that stretch reads LAIIVGLFALCWLPLHIINCFTFF. Asn253 serves as a coordination point for adenosine. A disulfide bond links Cys259 and Cys262. At 259-266 the chain is on the extracellular side; the sequence is CPECPHAP. The helical transmembrane segment at 267 to 290 threads the bilayer; it reads LWLMYPAIILSHFNSVVNPFIYAY. Adenosine contacts are provided by Ser277 and His278. At 291–412 the chain is on the cytoplasmic side; that stretch reads RIREFRHTFH…PLAQDGAGVS (122 aa). The tract at residues 368 to 412 is disordered; it reads RASARESPGDTGLPDVELLSHELHGASPESPGLEGPLAQDGAGVS.

Belongs to the G-protein coupled receptor 1 family. As to quaternary structure, interacts (via cytoplasmic C-terminal domain) with USP4; the interaction is direct. May interact with DRD4. Interacts with NECAB2. Interacts (via cytoplasmic C-terminal domain) with GAS2L2; interaction enhances receptor-mediated adenylyl cyclase activity. In terms of processing, ubiquitinated. Deubiquitinated by USP4; leading to stabilization and expression at the cell surface.

The protein localises to the cell membrane. In terms of biological role, receptor for adenosine. The activity of this receptor is mediated by G proteins which activate adenylyl cyclase. The sequence is that of Adenosine receptor A2a (ADORA2A) from Equus caballus (Horse).